The sequence spans 2295 residues: Protein DOP1B (2295 aa).

A phosphoserine mark is found at S556 and S597. Disordered regions lie at residues 574-599, 651-684, 1034-1059, and 1092-1136; these read AGDEEPSFPPLKSEDSGIGLSASSPE, GEENKPEEPPGKGNKGQTQSTEHPGRKSSWDPKP, CKEACGESEPQEGAPEERLPRGQFTT, and DLPD…LQDL. Polar residues predominate over residues 1111-1131; it reads ADTSSGHTDSENTSTFSSPSH. Residue S1167 is modified to Phosphoserine.

The protein belongs to the DOP1 family. In terms of assembly, homooligomer. Heterotrimer with ATP9A and MON2; this interaction is retromer-independent. Interacts with SNX3. Expressed in liver, heart and brain.

It localises to the early endosome membrane. Its subcellular location is the golgi apparatus membrane. In terms of biological role, may play a role in regulating membrane trafficking of cargo proteins. Together with ATP9A and MON2, regulates SNX3 retromer-mediated endosomal sorting of WLS away from lysosomal degradation. This chain is Protein DOP1B (Dop1b), found in Mus musculus (Mouse).